A 260-amino-acid polypeptide reads, in one-letter code: Putative ABC transporter substrate-binding lipoprotein YvgL (260 aa).

The first 20 residues, 1–20 (MFKKYSIFIAALTAFLLVAG), serve as a signal peptide directing secretion. C21 is lipidated: N-palmitoyl cysteine. C21 carries the S-diacylglycerol cysteine lipid modification. 5 residues coordinate molybdate: S43, S71, A151, V178, and Y196.

Belongs to the bacterial solute-binding protein ModA family.

The protein resides in the cell membrane. This Bacillus subtilis (strain 168) protein is Putative ABC transporter substrate-binding lipoprotein YvgL (yvgL).